The following is a 413-amino-acid chain: Scarecrow-like protein 21 (413 aa).

The region spanning Ile-41 to Lys-413 is the GRAS domain. The leucine repeat I (LRI) stretch occupies residues Gly-48–Ser-108. The tract at residues Val-127–Gly-192 is VHIID. The VHIID motif lies at Ile-158–Asp-162. Positions Thr-201 to Asn-233 are leucine repeat II (LRII). The tract at residues Leu-242 to Asn-336 is PFYRE. The interval Ala-339–Lys-413 is SAW.

Belongs to the GRAS family. As to quaternary structure, interacts with Meloidogyne incognita 16D10. In terms of tissue distribution, expressed in seedlings, roots, cotyledons, leaves and flowers.

The protein resides in the nucleus. Its function is as follows. Probable transcription factor involved in plant development. The sequence is that of Scarecrow-like protein 21 (SCL21) from Arabidopsis thaliana (Mouse-ear cress).